The primary structure comprises 293 residues: Beta-lactamase (293 aa).

The N-terminal stretch at Met-1–Ala-27 is a signal peptide. Ser-74 functions as the Acyl-ester intermediate in the catalytic mechanism. Lys-238–Gly-240 contributes to the substrate binding site.

It belongs to the class-A beta-lactamase family.

The protein resides in the periplasm. It catalyses the reaction a beta-lactam + H2O = a substituted beta-amino acid. In terms of biological role, hydrolyzes beta-lactams antibiotics. Rates of hydrolysis relative to benzylpenicillin =100: ampicillin = 27, carbenicillin = 25, cloxacillin = 0, cephaloridine = 4. The polypeptide is Beta-lactamase (Rhodobacter capsulatus (Rhodopseudomonas capsulata)).